The chain runs to 322 residues: CPX chromosomal region candidate gene 1 protein homolog (322 aa).

Polar residues-rich tracts occupy residues 1-23 and 37-78; these read MTSS…NETP and TNIS…TQND. The interval 1 to 83 is disordered; sequence MTSSNQGNDP…MTQNDPPDEE (83 aa).

The polypeptide is CPX chromosomal region candidate gene 1 protein homolog (Cpxcr1) (Mus musculus (Mouse)).